A 409-amino-acid polypeptide reads, in one-letter code: NDP-glycosyltransferase ltbB (409 aa).

Residue asparagine 36 is glycosylated (N-linked (GlcNAc...) asparagine). The helical transmembrane segment at 319-339 (IWAFAYVWAWLQTLYTAPWIA) threads the bilayer.

It belongs to the GT2 glycosyltransferase family.

It localises to the membrane. It functions in the pathway secondary metabolite biosynthesis. NDP-glycosyltransferase; part of the gene cluster that mediates the biosynthesis of luteodienoside A, a glycosylated polyketide consisting of an unusual 1-O-beta-D-glucopyranosyl-myo-inositol (glucinol) ester of 3-hydroxy-2,2,4-trimethylocta-4,6-dienoic acid. LtbB likely serves as a glucinol synthase by transferring D-glucose to myo-inositol using NDP-glucose as a substrate. The ltbA carnitine O-acyltransferase (cAT) domain uses glucinol produced by the glycosyltransferase ltbB as an offloading substrate to release luteodienoside A from the HR-PKS. Since ltbA and ltbB are sufficient for the biosynthesis of luteodienoside A, the functions of the methyltransferase ltbC and the FAD-binding monooxygenase ltbD within the pathway remain obscur. In Aspergillus luteorubrus, this protein is NDP-glycosyltransferase ltbB.